A 455-amino-acid polypeptide reads, in one-letter code: 3-isopropylmalate dehydratase large subunit (455 aa).

Residues cysteine 337, cysteine 397, and cysteine 400 each coordinate [4Fe-4S] cluster.

The protein belongs to the aconitase/IPM isomerase family. LeuC type 1 subfamily. Heterodimer of LeuC and LeuD. The cofactor is [4Fe-4S] cluster.

The enzyme catalyses (2R,3S)-3-isopropylmalate = (2S)-2-isopropylmalate. The protein operates within amino-acid biosynthesis; L-leucine biosynthesis; L-leucine from 3-methyl-2-oxobutanoate: step 2/4. Its function is as follows. Catalyzes the isomerization between 2-isopropylmalate and 3-isopropylmalate, via the formation of 2-isopropylmaleate. The chain is 3-isopropylmalate dehydratase large subunit from Leuconostoc citreum (strain KM20).